The following is a 361-amino-acid chain: S-adenosylmethionine:tRNA ribosyltransferase-isomerase (361 aa).

It belongs to the QueA family. Monomer.

It localises to the cytoplasm. The catalysed reaction is 7-aminomethyl-7-carbaguanosine(34) in tRNA + S-adenosyl-L-methionine = epoxyqueuosine(34) in tRNA + adenine + L-methionine + 2 H(+). The protein operates within tRNA modification; tRNA-queuosine biosynthesis. Functionally, transfers and isomerizes the ribose moiety from AdoMet to the 7-aminomethyl group of 7-deazaguanine (preQ1-tRNA) to give epoxyqueuosine (oQ-tRNA). This chain is S-adenosylmethionine:tRNA ribosyltransferase-isomerase, found in Haemophilus ducreyi (strain 35000HP / ATCC 700724).